We begin with the raw amino-acid sequence, 140 residues long: Proline-rich nuclear receptor coactivator 2 (140 aa).

The segment at 1-81 (MGGGERYNIP…NSNWNAGLSS (81 aa)) is disordered. 2 stretches are compositionally biased toward polar residues: residues 11–38 (DPQSRNASKNQEQQNRQKSKDQNSSQTK) and 59–81 (AMQNGGKTKSLSNNSNWNAGLSS). The short motif at 100–106 (SEPPSPS) is the SH3-binding element.

This sequence belongs to the PNRC family. PNRC2 subfamily. Interacts with UPF1/RENT1; preferentially interacts with hyperphosphorylated form. Interacts with DCP1A. Interacts with many nuclear receptors including ESR1, ESRRA, ESRRG, NR3C1/GR, NR5A1, PGR, TR, RAR and RXR. Strong expression is detected in lung, spleen, ovary, thymus, and colon.

It is found in the nucleus. Its subcellular location is the cytoplasm. The protein resides in the P-body. Involved in nonsense-mediated mRNA decay (NMD) by acting as a bridge between the mRNA decapping complex and the NMD machinery. May act by targeting the NMD machinery to the P-body and recruiting the decapping machinery to aberrant mRNAs. Required for UPF1/RENT1 localization to the P-body. Plays a role in glucocorticoid receptor-mediated mRNA degradation by interacting with the glucocorticoid receptor NR3C1 in a ligand-dependent manner when it is bound to the 5' UTR of target mRNAs and recruiting the RNA helicase UPF1 and the mRNA-decapping enzyme DCP1A, leading to RNA decay. Also acts as a nuclear receptor coactivator. May play a role in controlling the energy balance between energy storage and energy expenditure. The sequence is that of Proline-rich nuclear receptor coactivator 2 (Pnrc2) from Mus musculus (Mouse).